Consider the following 313-residue polypeptide: Acetyl-coenzyme A carboxylase carboxyl transferase subunit alpha (313 aa).

Positions 34 to 288 (KLKDQRDIAL…KNVVLEAVNE (255 aa)) constitute a CoA carboxyltransferase C-terminal domain.

The protein belongs to the AccA family. Acetyl-CoA carboxylase is a heterohexamer composed of biotin carboxyl carrier protein (AccB), biotin carboxylase (AccC) and two subunits each of ACCase subunit alpha (AccA) and ACCase subunit beta (AccD).

It localises to the cytoplasm. It carries out the reaction N(6)-carboxybiotinyl-L-lysyl-[protein] + acetyl-CoA = N(6)-biotinyl-L-lysyl-[protein] + malonyl-CoA. Its pathway is lipid metabolism; malonyl-CoA biosynthesis; malonyl-CoA from acetyl-CoA: step 1/1. Its function is as follows. Component of the acetyl coenzyme A carboxylase (ACC) complex. First, biotin carboxylase catalyzes the carboxylation of biotin on its carrier protein (BCCP) and then the CO(2) group is transferred by the carboxyltransferase to acetyl-CoA to form malonyl-CoA. In Fusobacterium nucleatum subsp. nucleatum (strain ATCC 25586 / DSM 15643 / BCRC 10681 / CIP 101130 / JCM 8532 / KCTC 2640 / LMG 13131 / VPI 4355), this protein is Acetyl-coenzyme A carboxylase carboxyl transferase subunit alpha.